The sequence spans 250 residues: tRNA (guanine-N(7)-)-methyltransferase (250 aa).

S-adenosyl-L-methionine-binding residues include E86, E111, D138, and D161. D161 is a catalytic residue. Substrate is bound by residues K165, D197, and 229–232; that span reads TEFE.

Belongs to the class I-like SAM-binding methyltransferase superfamily. TrmB family.

It carries out the reaction guanosine(46) in tRNA + S-adenosyl-L-methionine = N(7)-methylguanosine(46) in tRNA + S-adenosyl-L-homocysteine. Its pathway is tRNA modification; N(7)-methylguanine-tRNA biosynthesis. Functionally, catalyzes the formation of N(7)-methylguanine at position 46 (m7G46) in tRNA. This chain is tRNA (guanine-N(7)-)-methyltransferase, found in Treponema pallidum (strain Nichols).